The chain runs to 666 residues: Protein-arginine deiminase type-4 (666 aa).

Ca(2+) contacts are provided by Asn-153, Asp-155, Asp-165, Asp-168, Asp-176, and Asp-179. Residues Arg-212 and Arg-218 each carry the citrulline modification. Gln-349 lines the Ca(2+) pocket. Asp-350 is an active-site residue. Positions 351, 353, 369, and 370 each coordinate Ca(2+). Residues Arg-372, Arg-374, and Arg-383 each carry the citrulline modification. Substrate is bound at residue Arg-374. 3 residues coordinate Ca(2+): Phe-407, Leu-410, and Glu-411. Active-site residues include His-471, Asp-473, and Cys-648.

The protein belongs to the protein arginine deiminase family. Ca(2+) is required as a cofactor. Post-translationally, autocitrullination at Arg-372 and Arg-374 inactivates the enzyme. As to expression, epidermis.

It localises to the cytoplasm. The protein localises to the nucleus. The protein resides in the cytoplasmic granule. The catalysed reaction is L-arginyl-[protein] + H2O = L-citrullyl-[protein] + NH4(+). In terms of biological role, catalyzes the citrullination/deimination of arginine residues of proteins such as histones, thereby playing a key role in histone code and regulation of stem cell maintenance. Citrullinates histone H1 at 'Arg-54' (to form H1R54ci), histone H3 at 'Arg-2', 'Arg-8', 'Arg-17' and/or 'Arg-26' (to form H3R2ci, H3R8ci, H3R17ci, H3R26ci, respectively) and histone H4 at 'Arg-3' (to form H4R3ci). Acts as a key regulator of stem cell maintenance by mediating citrullination of histone H1: citrullination of 'Arg-54' of histone H1 (H1R54ci) results in H1 displacement from chromatin and global chromatin decondensation, thereby promoting pluripotency and stem cell maintenance. Promotes profound chromatin decondensation during the innate immune response to infection in neutrophils by mediating formation of H1R54ci. Required for the formation of neutrophil extracellular traps (NETs); NETs are mainly composed of DNA fibers and are released by neutrophils to bind pathogens during inflammation. Citrullination of histone H3 prevents their methylation by CARM1 and HRMT1L2/PRMT1 and represses transcription. Citrullinates EP300/P300 at 'Arg-2142', which favors its interaction with NCOA2/GRIP1. The chain is Protein-arginine deiminase type-4 (Padi4) from Rattus norvegicus (Rat).